We begin with the raw amino-acid sequence, 1705 residues long: Intersectin-1 (1705 aa).

2 EH domains span residues 21–109 and 220–309; these read ERAK…PVAM and SRLK…SFRR. EF-hand domains lie at 53 to 88 and 253 to 288; these read LPQP…IKLK and LPQS…IDVA. Aspartate 66, asparagine 68, aspartate 70, arginine 72, glutamate 77, aspartate 266, aspartate 268, aspartate 270, lysine 272, and glutamate 277 together coordinate Ca(2+). Disordered stretches follow at residues 322–355, 386–433, and 668–708; these read VSVD…KREN, RAEQ…ERRE, and RYKF…PPEP. The KLERQ stretch occupies residues 325–697; it reads DQRLPEEPEE…VEKKPEIQEK (373 aa). Over residues 339–355 the composition is skewed to basic and acidic residues; that stretch reads NADKKLPVTFEDKKREN. Positions 350-687 form a coiled coil; that stretch reads DKKRENFERG…KREESIQKCE (338 aa). Positions 668-699 are enriched in basic and acidic residues; that stretch reads RYKFQDEEKEKREESIQKCEVEKKPEIQEKPN. The 62-residue stretch at 732–793 folds into the SH3 1 domain; it reads VKVVYYRALY…PANYAERMPE (62 aa). The segment covering 823–833 has biased composition (low complexity); sequence AFTNTSTNSNN. The tract at residues 823-851 is disordered; the sequence is AFTNTSTNSNNWADFSSTWPTNNTDKVES. Polar residues predominate over residues 834 to 846; that stretch reads WADFSSTWPTNNT. Positions 897-955 constitute an SH3 2 domain; it reads VEGLQAQALYPWRAKKDNHLNFNKNDVITVLEQQDMWWFGEVQGQKGWFPKSYVKLISG. The segment at 959–978 is disordered; that stretch reads KSTSIDSTSSESPASLKRVS. Positions 960-973 are enriched in low complexity; the sequence is STSIDSTSSESPAS. 3 SH3 domains span residues 986-1044, 1058-1122, and 1139-1198; these read IQGE…PKDS, KKPE…LLSP, and PPTC…LTTD. The Bipartite nuclear localization signal; in isoform 2 signature appears at 1088-1111; that stretch reads RKKNPGGWWEGELQARGKKRQIGW. The DH domain maps to 1221–1407; that stretch reads KRQGYIHELI…EELCSQVNEG (187 aa). Residues 1446-1555 enclose the PH domain; the sequence is KFLHSGKLYK…WVQKIKAASE (110 aa). The C2 domain maps to 1563 to 1679; it reads KKREKAYLVR…KKDQGSKGPV (117 aa). Ca(2+)-binding residues include aspartate 1651, serine 1654, and aspartate 1657.

In terms of assembly, binds epn1 and epn2. Ca(2+) serves as cofactor.

The protein resides in the endomembrane system. It is found in the synapse. The protein localises to the synaptosome. Its subcellular location is the cell projection. It localises to the lamellipodium. The protein resides in the cell membrane. It is found in the membrane. The protein localises to the clathrin-coated pit. Its subcellular location is the recycling endosome. It localises to the cytoplasm. The protein resides in the nucleus envelope. Functionally, adapter protein that provides a link between the endocytic membrane traffic and the actin assembly machinery. Acts as a guanine nucleotide exchange factor (GEF) for cdc42, and thereby stimulates actin nucleation mediated by wasl and the arp2/3 complex. Involved in endocytosis of activated egfr, and probably also other growth factor receptors. The chain is Intersectin-1 (itsn1) from Xenopus laevis (African clawed frog).